The chain runs to 88 residues: MGGISITQLLIIASIVVVLFGTKKLRGLGSDLGASIKGFKKSMSEDDNTTSTSSDKSSQDADFTAPPIEPKANLACPDEAKNKDKEHV.

A helical membrane pass occupies residues Met1–Gly21. Residues Phe39–Val88 form a disordered region. Positions Thr49–Asp62 are enriched in low complexity. Over residues Asp78–Val88 the composition is skewed to basic and acidic residues.

It belongs to the TatA/E family. The Tat system comprises two distinct complexes: a TatABC complex, containing multiple copies of TatA, TatB and TatC subunits, and a separate TatA complex, containing only TatA subunits. Substrates initially bind to the TatABC complex, which probably triggers association of the separate TatA complex to form the active translocon.

The protein localises to the cell inner membrane. Functionally, part of the twin-arginine translocation (Tat) system that transports large folded proteins containing a characteristic twin-arginine motif in their signal peptide across membranes. TatA could form the protein-conducting channel of the Tat system. This Sodalis glossinidius (strain morsitans) protein is Sec-independent protein translocase protein TatA.